Here is a 140-residue protein sequence, read N- to C-terminus: Profilin-2 (140 aa).

Residue Ala-2 is modified to N-acetylalanine.

The protein belongs to the profilin family. As to quaternary structure, occurs in many kinds of cells as a complex with monomeric actin in a 1:1 ratio. Interacts with PFN2. Interacts with ACTMAP (via N-terminus); the interaction may facilitate efficient cleavage of the acetylated N-terminus of immature actin by ACTMAP.

The protein localises to the cytoplasm. It is found in the cytoskeleton. Functionally, binds to actin and affects the structure of the cytoskeleton. At high concentrations, profilin prevents the polymerization of actin, whereas it enhances it at low concentrations. By binding to PIP2, it inhibits the formation of IP3 and DG. This chain is Profilin-2 (PFN2), found in Bos taurus (Bovine).